Reading from the N-terminus, the 447-residue chain is Mannose/glucose-specific lectin (447 aa).

3 repeat units span residues 1–149, 150–295, and 296–447. The segment at 1–447 is 3 X approximate tandem repeats; that stretch reads SLKGMISVGP…GIFVKPDTAV (447 aa). Jacalin-type lectin domains are found at residues 5-148, 153-294, and 300-443; these read MISV…FVQP, TISF…YVKP, and SISI…FVKP.

This sequence belongs to the jacalin lectin family. Homodimer. The N-terminus is blocked.

Its function is as follows. Mannose/glucose specific lectin. Shows agglutinating activity against rabbit erythrocytes. This is Mannose/glucose-specific lectin from Parkia platycephala.